The primary structure comprises 720 residues: Putative fatty acid oxidation complex trifunctional enzyme (720 aa).

Residues 1-384 form a 3-hydroxyacyl-CoA dehydrogenase region; it reads MQNEIKKVCV…SWHYGPFELL (384 aa). The segment at 453-720 is enoyl-CoA hydratase/isomerase; sequence FVITTKMNSL…TIEKLQAIVG (268 aa).

The protein in the N-terminal section; belongs to the 3-hydroxyacyl-CoA dehydrogenase family. This sequence in the C-terminal section; belongs to the enoyl-CoA hydratase/isomerase family.

The enzyme catalyses a (3S)-3-hydroxyacyl-CoA + NAD(+) = a 3-oxoacyl-CoA + NADH + H(+). It catalyses the reaction a (3S)-3-hydroxyacyl-CoA = a (2E)-enoyl-CoA + H2O. It carries out the reaction a 4-saturated-(3S)-3-hydroxyacyl-CoA = a (3E)-enoyl-CoA + H2O. The catalysed reaction is a (3Z)-enoyl-CoA = a 4-saturated (2E)-enoyl-CoA. The enzyme catalyses a (3E)-enoyl-CoA = a 4-saturated (2E)-enoyl-CoA. This chain is Putative fatty acid oxidation complex trifunctional enzyme, found in Rickettsia prowazekii (strain Madrid E).